A 396-amino-acid chain; its full sequence is 1-deoxy-D-xylulose 5-phosphate reductoisomerase (396 aa).

5 residues coordinate NADPH: T10, G11, S12, I13, and N123. K124 serves as a coordination point for 1-deoxy-D-xylulose 5-phosphate. E125 provides a ligand contact to NADPH. A Mn(2+)-binding site is contributed by D149. S150, E151, S185, and H208 together coordinate 1-deoxy-D-xylulose 5-phosphate. E151 contributes to the Mn(2+) binding site. G214 contributes to the NADPH binding site. Residues S221, N226, K227, and E230 each coordinate 1-deoxy-D-xylulose 5-phosphate. Position 230 (E230) interacts with Mn(2+).

This sequence belongs to the DXR family. It depends on Mg(2+) as a cofactor. The cofactor is Mn(2+).

The enzyme catalyses 2-C-methyl-D-erythritol 4-phosphate + NADP(+) = 1-deoxy-D-xylulose 5-phosphate + NADPH + H(+). The protein operates within isoprenoid biosynthesis; isopentenyl diphosphate biosynthesis via DXP pathway; isopentenyl diphosphate from 1-deoxy-D-xylulose 5-phosphate: step 1/6. Catalyzes the NADPH-dependent rearrangement and reduction of 1-deoxy-D-xylulose-5-phosphate (DXP) to 2-C-methyl-D-erythritol 4-phosphate (MEP). The polypeptide is 1-deoxy-D-xylulose 5-phosphate reductoisomerase (Shewanella sp. (strain MR-7)).